Consider the following 68-residue polypeptide: uncharacterized protein (68 aa).

This is an uncharacterized protein from Dictyostelium discoideum (Social amoeba).